The chain runs to 447 residues: GTPase Der (447 aa).

2 consecutive EngA-type G domains span residues 4-165 and 180-357; these read QIIT…PEEE and LQIV…KIWN. GTP-binding positions include 10-17, 57-61, 119-122, 186-193, 233-237, and 298-301; these read GRPNVGKS, DTPGL, NKCE, GRPNAGKS, DTAGL, and NKWD. Residues 358–443 enclose the KH-like domain; sequence KKITTSKLNE…PIRFTYVKTK (86 aa).

This sequence belongs to the TRAFAC class TrmE-Era-EngA-EngB-Septin-like GTPase superfamily. EngA (Der) GTPase family. As to quaternary structure, associates with the 50S ribosomal subunit.

In terms of biological role, GTPase that plays an essential role in the late steps of ribosome biogenesis. The polypeptide is GTPase Der (Rickettsia rickettsii (strain Iowa)).